A 222-amino-acid polypeptide reads, in one-letter code: Nudix hydrolase 11 (222 aa).

Residues A31–F175 form the Nudix hydrolase domain. A Nudix box motif is present at residues G73 to G96. Residues E90 and E94 each contribute to the Mg(2+) site. A helical transmembrane segment spans residues F186 to Y204.

It belongs to the Nudix hydrolase family. PCD1 subfamily. It depends on Mn(2+) as a cofactor. The cofactor is Mg(2+). In terms of tissue distribution, expressed in roots, stems and leaves.

Its subcellular location is the peroxisome membrane. In terms of biological role, coenzyme A diphosphatase which mediates the cleavage of CoA into 3',5'-ADP from CoA and 4'-phosphopantetheine. Can use malonyl-CoA, hexanoyl-CoA, lauroyl-CoA, myristoyl-CoA and palmitoyl-CoA as substrates, but not isobutyryl-CoA or propionyl-CoA. This Arabidopsis thaliana (Mouse-ear cress) protein is Nudix hydrolase 11 (NUDT11).